The chain runs to 110 residues: Large ribosomal subunit protein uL22 (110 aa).

The protein belongs to the universal ribosomal protein uL22 family. As to quaternary structure, part of the 50S ribosomal subunit.

Functionally, this protein binds specifically to 23S rRNA; its binding is stimulated by other ribosomal proteins, e.g. L4, L17, and L20. It is important during the early stages of 50S assembly. It makes multiple contacts with different domains of the 23S rRNA in the assembled 50S subunit and ribosome. The globular domain of the protein is located near the polypeptide exit tunnel on the outside of the subunit, while an extended beta-hairpin is found that lines the wall of the exit tunnel in the center of the 70S ribosome. This Shewanella denitrificans (strain OS217 / ATCC BAA-1090 / DSM 15013) protein is Large ribosomal subunit protein uL22.